The chain runs to 308 residues: 4-hydroxyproline 2-epimerase (308 aa).

The active-site Proton acceptor is the cysteine 88. Substrate-binding positions include 89 to 90, histidine 208, and aspartate 232; that span reads GH. Cysteine 236 functions as the Proton donor in the catalytic mechanism. Position 237-238 (237-238) interacts with substrate; the sequence is GT.

The protein belongs to the proline racemase family.

The catalysed reaction is trans-4-hydroxy-L-proline = cis-4-hydroxy-D-proline. In terms of biological role, catalyzes the epimerization of trans-4-hydroxy-L-proline (t4LHyp) to cis-4-hydroxy-D-proline (c4DHyp). Is likely involved in a degradation pathway that converts t4LHyp to alpha-ketoglutarate. Can also catalyze the epimerization of trans-3-hydroxy-L-proline (t3LHyp) to cis-3-hydroxy-D-proline (c3DHyp), albeit with 19-fold lower efficiency. Displays no proline racemase activity. This Chromobacterium violaceum (strain ATCC 12472 / DSM 30191 / JCM 1249 / CCUG 213 / NBRC 12614 / NCIMB 9131 / NCTC 9757 / MK) protein is 4-hydroxyproline 2-epimerase.